A 462-amino-acid polypeptide reads, in one-letter code: Argininosuccinate lyase (462 aa).

Belongs to the lyase 1 family. Argininosuccinate lyase subfamily.

It is found in the cytoplasm. It catalyses the reaction 2-(N(omega)-L-arginino)succinate = fumarate + L-arginine. Its pathway is amino-acid biosynthesis; L-arginine biosynthesis; L-arginine from L-ornithine and carbamoyl phosphate: step 3/3. This chain is Argininosuccinate lyase, found in Caldicellulosiruptor bescii (strain ATCC BAA-1888 / DSM 6725 / KCTC 15123 / Z-1320) (Anaerocellum thermophilum).